We begin with the raw amino-acid sequence, 692 residues long: Elongation factor G (692 aa).

One can recognise a tr-type G domain in the interval 8–282; that stretch reads ENTRNIGIMA…AVIDYLPSPL (275 aa). Residues 17–24, 81–85, and 135–138 each bind GTP; these read AHIDAGKT, DTPGH, and NKMD.

This sequence belongs to the TRAFAC class translation factor GTPase superfamily. Classic translation factor GTPase family. EF-G/EF-2 subfamily.

It is found in the cytoplasm. Catalyzes the GTP-dependent ribosomal translocation step during translation elongation. During this step, the ribosome changes from the pre-translocational (PRE) to the post-translocational (POST) state as the newly formed A-site-bound peptidyl-tRNA and P-site-bound deacylated tRNA move to the P and E sites, respectively. Catalyzes the coordinated movement of the two tRNA molecules, the mRNA and conformational changes in the ribosome. The protein is Elongation factor G of Bacillus anthracis (strain CDC 684 / NRRL 3495).